Consider the following 80-residue polypeptide: RNA-binding protein Hfq (80 aa).

Positions 10-69 (DPFLNTLRREHVPVSIYLVNGIKLQGQIESFDQYVVLLKNTVTQMVYKHAISTVVPARPV) constitute a Sm domain.

Belongs to the Hfq family. As to quaternary structure, homohexamer.

Functionally, RNA chaperone that binds small regulatory RNA (sRNAs) and mRNAs to facilitate mRNA translational regulation in response to envelope stress, environmental stress and changes in metabolite concentrations. Also binds with high specificity to tRNAs. The protein is RNA-binding protein Hfq of Azoarcus sp. (strain BH72).